The following is a 117-amino-acid chain: Large ribosomal subunit protein bL20 (117 aa).

Belongs to the bacterial ribosomal protein bL20 family.

Functionally, binds directly to 23S ribosomal RNA and is necessary for the in vitro assembly process of the 50S ribosomal subunit. It is not involved in the protein synthesizing functions of that subunit. This Pelobacter propionicus (strain DSM 2379 / NBRC 103807 / OttBd1) protein is Large ribosomal subunit protein bL20.